The sequence spans 590 residues: Ankyrin repeat domain-containing protein 13A (590 aa).

ANK repeat units follow at residues 40–69 (RGRT…DVTK) and 73–102 (QGWT…YHNT). S205 is modified (phosphoserine). 4 UIM domains span residues 483–502 (EDYE…SSRS), 519–538 (TYDA…STEG), 549–568 (RFDN…LEEW), and 574–590 (EEEA…LTDK). A Phosphoserine modification is found at S586.

Interacts (via the UIM 3 and 4 repeats) with EGFR (ubiquitinated); the interaction is direct, inhibited by ANKRD13A monoubiquitination and may regulate EGFR internalization. In terms of processing, monoubiquitinated, inhibits interaction with ubiquitinated EGFR.

It localises to the cell membrane. The protein resides in the late endosome. Its function is as follows. Ubiquitin-binding protein that specifically recognizes and binds 'Lys-63'-linked ubiquitin. Does not bind 'Lys-48'-linked ubiquitin. Positively regulates the internalization of ligand-activated EGFR by binding to the Ub moiety of ubiquitinated EGFR at the cell membrane. The chain is Ankyrin repeat domain-containing protein 13A (ANKRD13A) from Homo sapiens (Human).